A 500-amino-acid chain; its full sequence is ATP synthase subunit beta (500 aa).

157 to 164 contributes to the ATP binding site; that stretch reads GGAGVGKT.

The protein belongs to the ATPase alpha/beta chains family. As to quaternary structure, F-type ATPases have 2 components, CF(1) - the catalytic core - and CF(0) - the membrane proton channel. CF(1) has five subunits: alpha(3), beta(3), gamma(1), delta(1), epsilon(1). CF(0) has three main subunits: a(1), b(2) and c(9-12). The alpha and beta chains form an alternating ring which encloses part of the gamma chain. CF(1) is attached to CF(0) by a central stalk formed by the gamma and epsilon chains, while a peripheral stalk is formed by the delta and b chains.

It is found in the cell inner membrane. It carries out the reaction ATP + H2O + 4 H(+)(in) = ADP + phosphate + 5 H(+)(out). In terms of biological role, produces ATP from ADP in the presence of a proton gradient across the membrane. The catalytic sites are hosted primarily by the beta subunits. In Salinibacter ruber (strain DSM 13855 / M31), this protein is ATP synthase subunit beta.